Consider the following 144-residue polypeptide: Ribosome-binding factor A (144 aa).

Disordered stretches follow at residues 1 to 22 (MPRHHQKKSSASGGGSQRQLRV) and 125 to 144 (TPAVQKDLEQDPDSDREEEQ). Over residues 134-144 (QDPDSDREEEQ) the composition is skewed to acidic residues.

Belongs to the RbfA family. As to quaternary structure, monomer. Binds 30S ribosomal subunits, but not 50S ribosomal subunits or 70S ribosomes.

The protein resides in the cytoplasm. Its function is as follows. One of several proteins that assist in the late maturation steps of the functional core of the 30S ribosomal subunit. Associates with free 30S ribosomal subunits (but not with 30S subunits that are part of 70S ribosomes or polysomes). Required for efficient processing of 16S rRNA. May interact with the 5'-terminal helix region of 16S rRNA. The chain is Ribosome-binding factor A from Bradyrhizobium diazoefficiens (strain JCM 10833 / BCRC 13528 / IAM 13628 / NBRC 14792 / USDA 110).